The primary structure comprises 186 residues: UPF0301 protein Sfri_2850 (186 aa).

This sequence belongs to the UPF0301 (AlgH) family.

This chain is UPF0301 protein Sfri_2850, found in Shewanella frigidimarina (strain NCIMB 400).